The sequence spans 626 residues: Membrane protein insertase YidC (626 aa).

The next 5 helical transmembrane spans lie at leucine 8–proline 28, methionine 399–tyrosine 419, leucine 469–leucine 489, serine 527–leucine 547, and isoleucine 563–leucine 583.

Belongs to the OXA1/ALB3/YidC family. Type 1 subfamily. Interacts with the Sec translocase complex via SecD. Specifically interacts with transmembrane segments of nascent integral membrane proteins during membrane integration.

The protein localises to the cell inner membrane. Functionally, required for the insertion and/or proper folding and/or complex formation of integral membrane proteins into the membrane. Involved in integration of membrane proteins that insert both dependently and independently of the Sec translocase complex, as well as at least some lipoproteins. Aids folding of multispanning membrane proteins. The sequence is that of Membrane protein insertase YidC from Jannaschia sp. (strain CCS1).